The sequence spans 337 residues: Cytoskeleton protein RodZ (337 aa).

Residues 1–111 (MNTEATHDQN…LGKRRKKRDG (111 aa)) are Cytoplasmic-facing. Residues 19–71 (LRNAREQLGLSQQAVAERLCLKVSTVRDIEEDKAPADLASTFLRGYIRSYARL) enclose the HTH cro/C1-type domain. Residues 30–49 (QQAVAERLCLKVSTVRDIEE) constitute a DNA-binding region (H-T-H motif). The chain crosses the membrane as a helical; Signal-anchor for type II membrane protein span at residues 112-132 (WLMTFTWLVLFVVIGLSGAWW). At 133–337 (WQDHKAQQEE…TLNAEQSPAQ (205 aa)) the chain is on the periplasmic side. The segment covering 145–167 (TMADQSSAELSSNSEQGQSVPLN) has biased composition (polar residues). Residues 145-218 (TMADQSSAEL…AVVSPSQANV (74 aa)) form a disordered region. Low complexity predominate over residues 168 to 207 (TSTTTDPATTSTPPASVDTTATNTQTPAVTAPAPAVDPQQ). A compositionally biased stretch (polar residues) spans 208 to 218 (NAVVSPSQANV).

This sequence belongs to the RodZ family.

Its subcellular location is the cell inner membrane. In terms of biological role, cytoskeletal protein that is involved in cell-shape control through regulation of the length of the long axis. This chain is Cytoskeleton protein RodZ, found in Shigella flexneri serotype 5b (strain 8401).